The primary structure comprises 198 residues: Recombination protein RecR (198 aa).

The segment at 56-71 adopts a C4-type zinc-finger fold; sequence CTTCGNIDTHDPCAIC. The region spanning 79-174 is the Toprim domain; it reads RSLCVVEEVS…RLTQLAHGLP (96 aa).

The protein belongs to the RecR family.

Its function is as follows. May play a role in DNA repair. It seems to be involved in an RecBC-independent recombinational process of DNA repair. It may act with RecF and RecO. The chain is Recombination protein RecR from Sphingopyxis alaskensis (strain DSM 13593 / LMG 18877 / RB2256) (Sphingomonas alaskensis).